Here is a 166-residue protein sequence, read N- to C-terminus: UPF0304 protein PBPRA2768 (166 aa).

The protein belongs to the UPF0304 family.

The chain is UPF0304 protein PBPRA2768 from Photobacterium profundum (strain SS9).